A 538-amino-acid chain; its full sequence is Putative cysteine ligase BshC (538 aa).

A coiled-coil region spans residues 460–484 (KINEQIELLERMLKRNVEKKHEVEL).

This sequence belongs to the BshC family.

In terms of biological role, involved in bacillithiol (BSH) biosynthesis. May catalyze the last step of the pathway, the addition of cysteine to glucosamine malate (GlcN-Mal) to generate BSH. The chain is Putative cysteine ligase BshC from Bacillus cereus (strain ZK / E33L).